Reading from the N-terminus, the 251-residue chain is MEIKQMLVPVSRYSVLCPYEMNPTEITFHNTYNDAPAINERNNVANNSTGTSFHIAVDDKEAIQLIPFNRNAWHAGDGTNGRGNRHSIGVEICYSQSGGARYRKAELNAVEVIAQLMIQFDIPISKVKTHQERNGKYCPHRMLDEGRVQWFKNQCANRASSIKNSNKTQETGKVEIIVNKFNKVVTYEFGTALVPEMLGMMDALGYESRIISYGDKQGLVRFETAYRQGNELDKATAWLDAKGLKYFYTKE.

The signal sequence occupies residues methionine 1 to alanine 37. An N-acetylmuramoyl-L-alanine amidase domain is found at isoleucine 38–histidine 140.

The protein belongs to the N-acetylmuramoyl-L-alanine amidase 2 family.

The protein resides in the secreted. The enzyme catalyses Hydrolyzes the link between N-acetylmuramoyl residues and L-amino acid residues in certain cell-wall glycopeptides.. In terms of biological role, autolysins are involved in some important biological processes such as cell separation, cell-wall turnover, competence for genetic transformation, formation of the flagella and sporulation. This Bacillus sp protein is N-acetylmuramoyl-L-alanine amidase CwlA (cwlA).